Consider the following 275-residue polypeptide: 3-deoxy-manno-octulosonate cytidylyltransferase (275 aa).

This sequence belongs to the KdsB family.

Its subcellular location is the cytoplasm. It catalyses the reaction 3-deoxy-alpha-D-manno-oct-2-ulosonate + CTP = CMP-3-deoxy-beta-D-manno-octulosonate + diphosphate. The protein operates within nucleotide-sugar biosynthesis; CMP-3-deoxy-D-manno-octulosonate biosynthesis; CMP-3-deoxy-D-manno-octulosonate from 3-deoxy-D-manno-octulosonate and CTP: step 1/1. Its pathway is bacterial outer membrane biogenesis; lipopolysaccharide biosynthesis. Activates KDO (a required 8-carbon sugar) for incorporation into bacterial lipopolysaccharide in Gram-negative bacteria. The polypeptide is 3-deoxy-manno-octulosonate cytidylyltransferase (Psychrobacter sp. (strain PRwf-1)).